A 519-amino-acid chain; its full sequence is Bifunctional pantoate ligase/cytidylate kinase (519 aa).

Residues 1-282 (MNLTILRTKT…CGNTRLIDHG (282 aa)) form a pantoate--beta-alanine ligase region. 30–37 (MGGLHQGH) provides a ligand contact to ATP. Catalysis depends on H37, which acts as the Proton donor. Residue Q66 coordinates (R)-pantoate. Q66 provides a ligand contact to beta-alanine. 155–158 (GEKD) is an ATP binding site. Q161 contacts (R)-pantoate. 192–195 (CSSR) serves as a coordination point for ATP. Residues 283-519 (FLMKRNPIVA…PQEVWPTNAT (237 aa)) are cytidylate kinase.

The protein in the N-terminal section; belongs to the pantothenate synthetase family. In the C-terminal section; belongs to the cytidylate kinase family. Type 1 subfamily.

It localises to the cytoplasm. It carries out the reaction (R)-pantoate + beta-alanine + ATP = (R)-pantothenate + AMP + diphosphate + H(+). The enzyme catalyses CMP + ATP = CDP + ADP. The catalysed reaction is dCMP + ATP = dCDP + ADP. Its pathway is cofactor biosynthesis; (R)-pantothenate biosynthesis; (R)-pantothenate from (R)-pantoate and beta-alanine: step 1/1. Functionally, catalyzes the condensation of pantoate with beta-alanine in an ATP-dependent reaction via a pantoyl-adenylate intermediate. In terms of biological role, catalyzes the transfer of a phosphate group from ATP to either CMP or dCMP to form CDP or dCDP and ADP, respectively. This Prochlorococcus marinus (strain SARG / CCMP1375 / SS120) protein is Bifunctional pantoate ligase/cytidylate kinase.